The chain runs to 63 residues: MPKMKSVKSAVKRFKVGKNKIKRGSAFRSHILTKKPAKRMRDLRTAKYVHSTNVKAVEKMLGI.

It belongs to the bacterial ribosomal protein bL35 family.

This chain is Large ribosomal subunit protein bL35, found in Campylobacter jejuni (strain RM1221).